The primary structure comprises 62 residues: Ferredoxin-1 (62 aa).

2 consecutive 4Fe-4S ferredoxin-type domains span residues 3–32 and 33–62; these read WTVTVDTDKCTGDGECVDVCPVEVYELQDG and KAVPVNEEECLGCESCVEVCEAGAITVEEN. 2 residues coordinate [3Fe-4S] cluster: Cys-12 and Cys-18. Positions 22, 42, 45, and 48 each coordinate [4Fe-4S] cluster. Position 52 (Cys-52) interacts with [3Fe-4S] cluster.

Homodimer. The cofactor is [3Fe-4S] cluster. It depends on [4Fe-4S] cluster as a cofactor.

Its function is as follows. Ferredoxins are iron-sulfur proteins that transfer electrons in a wide variety of metabolic reactions. This ferredoxin serves as a carrier for pyruvate dehydrogenase. The sequence is that of Ferredoxin-1 from Nitratidesulfovibrio vulgaris (strain DSM 19637 / Miyazaki F) (Desulfovibrio vulgaris).